Here is a 224-residue protein sequence, read N- to C-terminus: Putative adhesin RF_1314 (224 aa).

The signal sequence occupies residues 1–22; that stretch reads MKKLLLIAATSATILSSSISFA.

The chain is Putative adhesin RF_1314 from Rickettsia felis (strain ATCC VR-1525 / URRWXCal2) (Rickettsia azadi).